The sequence spans 83 residues: MAQMQATHTIEGFLAVEVAPRAFVAENGHVLTRLSATKWGGGEGLEILNYEGPGTVEVSDEKLAEAQRASEVEAELRREVGKE.

The chain is Gene 3 protein (3) from Mycobacterium (Mycobacteriophage L5).